The following is a 110-amino-acid chain: MWRSSNQRGVSRRRDKSMRKYTRHGNADRRQRAIASMASVRKKKPRSKNTYTGNISSLPPRPNHRNIHLRNPLSPRFYHGRVHTQTHRHAQPTHVVVAGGYVDGAYRGET.

Residues 1 to 72 (MWRSSNQRGV…NHRNIHLRNP (72 aa)) form a disordered region. Positions 10-23 (VSRRRDKSMRKYTR) are enriched in basic residues. Residues 48–57 (KNTYTGNISS) show a composition bias toward polar residues.

This is an uncharacterized protein from Human herpesvirus 6A (strain Uganda-1102) (HHV-6 variant A).